The chain runs to 202 residues: Large ribosomal subunit protein bL25 (202 aa).

The protein belongs to the bacterial ribosomal protein bL25 family. CTC subfamily. As to quaternary structure, part of the 50S ribosomal subunit; part of the 5S rRNA/L5/L18/L25 subcomplex. Contacts the 5S rRNA. Binds to the 5S rRNA independently of L5 and L18.

Its function is as follows. This is one of the proteins that binds to the 5S RNA in the ribosome where it forms part of the central protuberance. In Rickettsia bellii (strain OSU 85-389), this protein is Large ribosomal subunit protein bL25.